Consider the following 708-residue polypeptide: Capsid scaffolding protein (708 aa).

Active-site charge relay system residues include His63, Ser132, and His157. Disordered stretches follow at residues 270-339 (SAER…MSHP), 455-565 (HPSY…QQQR), and 593-620 (ALPS…GGGE). Low complexity predominate over residues 284-293 (PAAGARVPSS). Residues 294–311 (SPSPPVEPPSPVQPPALP) show a composition bias toward pro residues. The span at 326–339 (SPSEPAEAASMSHP) shows a compositional bias: low complexity. An interaction with pAP region spans residues 333–352 (AASMSHPLSAAVPAATAPPG). The segment covering 498-513 (KQHRHGGSGGHNKRRK) has biased composition (basic residues). 2 consecutive short sequence motifs (nuclear localization signal) follow at residues 510 to 515 (KRRKET) and 537 to 543 (RARKRLK). Residues 593 to 615 (ALPSAASSSPTTTTVCTPTSELT) are compositionally biased toward low complexity. Residues 688–708 (PPKDMVDLNRRIFVAALNKLE) are interaction with major capsid protein.

Belongs to the herpesviridae capsid scaffolding protein family. As to quaternary structure, homomultimer. Interacts with major capsid protein. Exists in a monomer-dimer equilibrium with the dimer being the active species. In terms of processing, capsid scaffolding protein is cleaved by assemblin after formation of the spherical procapsid. As a result, the capsid obtains its mature, icosahedral shape. Cleavages occur at two or more sites: release (R-site) and maturation (M-site).

The protein resides in the host cytoplasm. Its subcellular location is the host nucleus. It catalyses the reaction Cleaves -Ala-|-Ser- and -Ala-|-Ala- bonds in the scaffold protein.. In terms of biological role, acts as a scaffold protein by binding major capsid protein in the cytoplasm, inducing the nuclear localization of both proteins. Multimerizes in the nucleus such as major capsid protein forms the icosahedral T=16 capsid. Autocatalytic cleavage releases the assembly protein, and subsequently abolishes interaction with major capsid protein. Cleavages products are evicted from the capsid before or during DNA packaging. Protease that plays an essential role in virion assembly within the nucleus. Catalyzes the cleavage of the assembly protein after formation of the spherical procapsid. By that cleavage, the capsid matures and gains its icosahedral shape. The cleavage sites seem to include -Ala-Ser-, -Ala-Ala-, as well as Ala-Thr bonds. Assemblin and cleavages products are evicted from the capsid before or during DNA packaging. Its function is as follows. Plays a major role in capsid assembly. Acts as a scaffold protein by binding major capsid protein. Multimerizes in the nucleus such as major capsid protein forms the icosahedral T=16 capsid. Cleaved by assemblin after capsid completion. The cleavages products are evicted from the capsid before or during DNA packaging. The protein is Capsid scaffolding protein (UL80) of Homo sapiens (Human).